Here is a 436-residue protein sequence, read N- to C-terminus: Trigger factor (436 aa).

The region spanning 162–247 is the PPIase FKBP-type domain; it reads GDRVIIDFEG…LNNVSEPTLP (86 aa).

This sequence belongs to the FKBP-type PPIase family. Tig subfamily.

The protein localises to the cytoplasm. The enzyme catalyses [protein]-peptidylproline (omega=180) = [protein]-peptidylproline (omega=0). Involved in protein export. Acts as a chaperone by maintaining the newly synthesized protein in an open conformation. Functions as a peptidyl-prolyl cis-trans isomerase. The sequence is that of Trigger factor from Neisseria gonorrhoeae (strain ATCC 700825 / FA 1090).